Here is a 117-residue protein sequence, read N- to C-terminus: Large ribosomal subunit protein uL18 (117 aa).

Belongs to the universal ribosomal protein uL18 family. As to quaternary structure, part of the 50S ribosomal subunit; part of the 5S rRNA/L5/L18/L25 subcomplex. Contacts the 5S and 23S rRNAs.

Functionally, this is one of the proteins that bind and probably mediate the attachment of the 5S RNA into the large ribosomal subunit, where it forms part of the central protuberance. This Idiomarina loihiensis (strain ATCC BAA-735 / DSM 15497 / L2-TR) protein is Large ribosomal subunit protein uL18.